Consider the following 441-residue polypeptide: Maltokinase (441 aa).

This sequence belongs to the aminoglycoside phosphotransferase family. In terms of assembly, monomer.

It catalyses the reaction D-maltose + ATP = alpha-maltose 1-phosphate + ADP + H(+). It participates in glycan biosynthesis; glycogen biosynthesis. Functionally, catalyzes the ATP-dependent phosphorylation of maltose to maltose 1-phosphate. Is involved in a branched alpha-glucan biosynthetic pathway from trehalose, together with TreS, GlgE and GlgB. The chain is Maltokinase (mak) from Mycolicibacterium vanbaalenii (strain DSM 7251 / JCM 13017 / BCRC 16820 / KCTC 9966 / NRRL B-24157 / PYR-1) (Mycobacterium vanbaalenii).